We begin with the raw amino-acid sequence, 894 residues long: B-cell lymphoma/leukemia 11B (894 aa).

Phosphoserine occurs at positions 97 and 110. A Phosphothreonine modification is found at T120. S129 carries the phosphoserine modification. K137 participates in a covalent cross-link: Glycyl lysine isopeptide (Lys-Gly) (interchain with G-Cter in SUMO2). Residues 221-251 (YICTTCKQPFNSAWFLLQHAQNTHGFRIYLE) form a C2H2-type 1 zinc finger. A Phosphoserine modification is found at S256. T260 carries the post-translational modification Phosphothreonine. Position 277 is a phosphoserine (S277). At R293 the chain carries Omega-N-methylarginine. Asymmetric dimethylarginine is present on R322. Phosphoserine is present on S358. Disordered stretches follow at residues 370–428 (LAGN…KSKS) and 471–583 (KRHM…GGGA). A Phosphothreonine modification is found at T376. Phosphoserine occurs at positions 381, 398, and 401. The segment covering 396–423 (QPSPKSPFLSTPPLPPMPPGGTPPPQPP) has biased composition (pro residues). A phosphothreonine mark is found at T406 and T417. 2 C2H2-type zinc fingers span residues 427 to 454 (KSCE…GEKP) and 455 to 482 (YKCQ…HKAG). A compositionally biased stretch (basic residues) spans 471–480 (KRHMKTHMHK). Residues S483, S488, S496, and S497 each carry the phosphoserine modification. A compositionally biased stretch (basic and acidic residues) spans 511–529 (KAADGDFRHHESDPSLGHE). Acidic residues predominate over residues 530–546 (PEEEDEEEEEEEEELLL). Gly residues predominate over residues 568 to 583 (NGGGGVPGVPGAGGGA). Glycyl lysine isopeptide (Lys-Gly) (interchain with G-Cter in SUMO2) cross-links involve residues K591 and K617. The segment at 653-680 (GRGGGFAPGTEPFPGLFPRKPAPLPSPG) is disordered. S678 is subject to Phosphoserine. Residues K686 and K723 each participate in a glycyl lysine isopeptide (Lys-Gly) (interchain with G-Cter in SUMO2) cross-link. Polar residues predominate over residues 737-752 (FATSSEHSSENGSLRF). Residues 737 to 794 (FATSSEHSSENGSLRFSTPPGDLLDGGLSGRSGTASGGSTPHLGGPGPGRPSSKEGRR) are disordered. Low complexity predominate over residues 753–775 (STPPGDLLDGGLSGRSGTASGGS). The residue at position 754 (T754) is a Phosphothreonine. Phosphoserine occurs at positions 765 and 772. C2H2-type zinc fingers lie at residues 796–823 (DTCE…GERP), 824–853 (YKCE…GKEV), and 854–884 (YRCD…LLTN). Residue K851 is modified to N6-acetyllysine. K887 participates in a covalent cross-link: Glycyl lysine isopeptide (Lys-Gly) (interchain with G-Cter in SUMO2).

As to quaternary structure, interacts with TFCOUP1, SIRT1, ARP1 and EAR2. Interacts with EP300; the interaction is detected in activated T-lymphocytes, but not under resting conditions. Sumoylated with SUMO1. Highly expressed in brain and in malignant T-cell lines derived from patients with adult T-cell leukemia/lymphoma.

The protein localises to the nucleus. Key regulator of both differentiation and survival of T-lymphocytes during thymocyte development in mammals. Essential in controlling the responsiveness of hematopoietic stem cells to chemotactic signals by modulating the expression of the receptors CCR7 and CCR9, which direct the movement of progenitor cells from the bone marrow to the thymus. Is a regulator of IL2 promoter and enhances IL2 expression in activated CD4(+) T-lymphocytes. Tumor-suppressor that represses transcription through direct, TFCOUP2-independent binding to a GC-rich response element. May also function in the P53-signaling pathway. This is B-cell lymphoma/leukemia 11B (BCL11B) from Homo sapiens (Human).